The following is a 104-amino-acid chain: Circadian clock oscillator protein KaiB (104 aa).

It belongs to the KaiB family. The KaiABC complex composition changes during the circadian cycle to control KaiC phosphorylation. Complexes KaiC(6), KaiA(2-4):KaiC(6), KaiB(6):KaiC(6) and KaiC(6):KaiB(6):KaiA(12) are among the most important forms, many form cooperatively. Undergoes a major conformational rearrangment; in the free state forms homotetramers as a dimer of dimers. When bound to the CI domain of KaiC switches to a monomeric thioredoxin-fold (KaiB(fs)). KaiB(fs) binds CikA, leading it to dephosphorylate phospho-RpaA.

Functionally, key component of the KaiABC oscillator complex, which constitutes the main circadian regulator in cyanobacteria. Complex composition changes during the circadian cycle to control KaiC phosphorylation. KaiA stimulates KaiC autophosphorylation, while KaiB sequesters KaiA, leading to KaiC autodephosphorylation. Phospho-Ser-431 KaiC accumulation triggers binding of KaiB to form the KaiB(6):KaiC(6) complex, leading to changes in output regulators CikA and SasA. KaiB switches to a thioredoxin-like fold (KaiB(fs)) when bound to KaiC. KaiB(6):KaiC(6) formation exposes a site for KaiA binding that sequesters KaiA from KaiC, making the KaiC(6):KaiB(6):KaiA(12) complex that results in KaiC autodephosphorylation. In terms of biological role, a metamorphic protein which reversibly switches between an inactive tetrameric fold and a rare, thioredoxin-like monomeric fold (KaiB(fs)). KaiB(fs) binds phospho-KaiC, KaiA and CikA. KaiA and CikA compete for binding to KaiB(fs), and KaiB(fs) and SasA compete for binding to KaiC, thus the clock oscillator and output signal pathway are tightly coupled. In Parasynechococcus marenigrum (strain WH8102), this protein is Circadian clock oscillator protein KaiB.